The sequence spans 416 residues: 4-hydroxy-3-methylbut-2-en-1-yl diphosphate synthase (flavodoxin) (416 aa).

Positions 304, 307, 350, and 357 each coordinate [4Fe-4S] cluster.

It belongs to the IspG family. [4Fe-4S] cluster is required as a cofactor.

The enzyme catalyses (2E)-4-hydroxy-3-methylbut-2-enyl diphosphate + oxidized [flavodoxin] + H2O + 2 H(+) = 2-C-methyl-D-erythritol 2,4-cyclic diphosphate + reduced [flavodoxin]. Its pathway is isoprenoid biosynthesis; isopentenyl diphosphate biosynthesis via DXP pathway; isopentenyl diphosphate from 1-deoxy-D-xylulose 5-phosphate: step 5/6. In terms of biological role, converts 2C-methyl-D-erythritol 2,4-cyclodiphosphate (ME-2,4cPP) into 1-hydroxy-2-methyl-2-(E)-butenyl 4-diphosphate. The sequence is that of 4-hydroxy-3-methylbut-2-en-1-yl diphosphate synthase (flavodoxin) from Rhizobium etli (strain CIAT 652).